The sequence spans 384 residues: 4-coumarate--CoA ligase (384 aa).

This sequence belongs to the ATP-dependent AMP-binding enzyme family.

It carries out the reaction (E)-4-coumarate + ATP + CoA = (E)-4-coumaroyl-CoA + AMP + diphosphate. Its function is as follows. Converts p-coumaric acid into p-coumaryl CoA. This is necessary for the activation of the photoactive yellow protein (PYP) chromophore. This chain is 4-coumarate--CoA ligase (pcl), found in Rhodobacter capsulatus (strain ATCC BAA-309 / NBRC 16581 / SB1003).